A 329-amino-acid polypeptide reads, in one-letter code: Deoxynucleotidyltransferase terminal-interacting protein 1 (329 aa).

The tract at residues 1-27 (MGATGDVEQPRGPGGAERGGPELGDAG) is disordered. Residues 12-22 (GPGGAERGGPE) are compositionally biased toward gly residues. An important for dimerization region spans residues 56 to 147 (MTTSFTDPAI…RLTHELPGIK (92 aa)). Positions 159 to 173 (RGSPIPKKRKGRPPG) form a DNA-binding region, a.T hook. Residue Ser-161 is modified to Phosphoserine. The Nuclear localization signal signature appears at 164–170 (PKKRKGR). Positions 197–316 (REGPKWDPAR…MRKYMETLRT (120 aa)) are important for DNA and nucleosome binding. Residues 216-237 (GSRANKALGMGGTRGRIYIKHP) constitute a DNA-binding region (H-T-H motif).

In terms of assembly, monomer and homodimer. A minor proportion may form homotrimers. Interacts with ZNF541. Interacts with the terminal deoxynucleotidyltransferase DNTT. Interacts with TRERF1. Identified in a histone deacetylase complex that contains DNTTIP1, HDAC1 and MIDEAS; this complex assembles into a tetramer that contains four copies of each protein chain. Component of a histone deacetylase complex containing DNTTIP1, ZNF541, HDAC1 and HDAC2. Identified in a complex with KCTD19, HDAC1, HDAC2 and ZNF541.

The protein resides in the nucleus. Increases DNTT terminal deoxynucleotidyltransferase activity (in vitro). Also acts as a transcriptional regulator, binding to the consensus sequence 5'-GNTGCATG-3' following an AT-tract. Associates with RAB20 promoter and positively regulates its transcription. Binds DNA and nucleosomes; may recruit HDAC1 complexes to nucleosomes or naked DNA. This is Deoxynucleotidyltransferase terminal-interacting protein 1 (DNTTIP1) from Bos taurus (Bovine).